Consider the following 383-residue polypeptide: Dephospho-CoA kinase (383 aa).

In terms of domain architecture, DPCK spans 3–201 (RIGLTGGMGA…RRLVPFERNL (199 aa)). Position 11–16 (11–16 (GAGKST)) interacts with ATP. The interval 196-383 (PFERNLRAAT…EVAERLLGTV (188 aa)) is UPF0157.

The protein in the N-terminal section; belongs to the CoaE family. This sequence in the C-terminal section; belongs to the UPF0157 (GrpB) family.

It is found in the cytoplasm. It catalyses the reaction 3'-dephospho-CoA + ATP = ADP + CoA + H(+). It participates in cofactor biosynthesis; coenzyme A biosynthesis; CoA from (R)-pantothenate: step 5/5. Functionally, catalyzes the phosphorylation of the 3'-hydroxyl group of dephosphocoenzyme A to form coenzyme A. The polypeptide is Dephospho-CoA kinase (Nocardia farcinica (strain IFM 10152)).